The chain runs to 918 residues: Exostosin-like 3 (918 aa).

At 1-30 (MTGYTMLRNGGVGNGGQTCMLRWSNRIRLT) the chain is on the cytoplasmic side. Residues 1–140 (MTGYTMLRNG…LKNVISQTEH (140 aa)) are required for interaction with REG3A. A helical; Signal-anchor for type II membrane protein membrane pass occupies residues 31 to 51 (WLSFTLFIILVFFPLIAHYYL). Over 52-918 (TTLDEADEAG…HDKTKCFKFI (867 aa)) the chain is Lumenal. Intrachain disulfides connect Cys-177–Cys-182 and Cys-188–Cys-236. An N-linked (GlcNAc...) asparagine glycan is attached at Asn-290. Ser-361 is subject to Phosphoserine. Cysteines 399 and 414 form a disulfide. N-linked (GlcNAc...) asparagine glycosylation occurs at Asn-591. The UDP-N-acetyl-alpha-D-glucosamine site is built by Leu-667, Arg-671, Asn-696, Asn-722, Arg-727, Asp-743, Asp-744, and Asp-745. Asp-745 is a Mn(2+) binding site. An N-linked (GlcNAc...) asparagine glycan is attached at Asn-789. The cysteines at positions 830 and 878 are disulfide-linked. Residues Glu-831, Asp-832, and Arg-875 each contribute to the UDP-N-acetyl-alpha-D-glucosamine site. The active site involves Asp-832.

Belongs to the glycosyltransferase 47 family. As to quaternary structure, homodimer; disulfide-linked. Interacts with REG3A. Requires Mn(2+) as cofactor. Expressed in pancreatic islet beta-cells. Expressed in lung epithelial cells. Expressed in microglia.

It is found in the endoplasmic reticulum membrane. The protein resides in the golgi apparatus. It localises to the cell membrane. Its subcellular location is the nucleus. It catalyses the reaction 3-O-(beta-D-GlcA-(1-&gt;3)-beta-D-Gal-(1-&gt;3)-beta-D-Gal-(1-&gt;4)-beta-D-Xyl)-L-seryl-[protein] + UDP-N-acetyl-alpha-D-glucosamine = 3-O-(alpha-D-GlcNAc-(1-&gt;4)-beta-D-GlcA-(1-&gt;3)-beta-D-Gal-(1-&gt;3)-beta-D-Gal-(1-&gt;4)-beta-D-Xyl)-L-seryl-[protein] + UDP + H(+). It participates in glycan metabolism; heparan sulfate biosynthesis. Its function is as follows. Glycosyltransferase which regulates the biosynthesis of heparan sulfate (HS). Initiates HS synthesis by transferring the first N-acetyl-alpha-D-glucosamine (alpha-GlcNAc) residue (GlcNAcT-I activity) to the tetrasaccharide linker (GlcA-Gal-Gal-Xyl-)Ser core linker. May also transfer alpha-GlcNAc residues during HS elongation (GlcNAcT-II activity). Lacks glucuronyl transferase II (GlcAT-II) activity. Important for both skeletal development and hematopoiesis, through the formation of HS proteoglycans (HSPGs). Through the synthesis of HS, regulates postnatal pancreatic islet maturation and insulin secretion. In terms of biological role, receptor for REG3A, REG3B and REG3G, induces the activation of downstream signaling pathways such as PI3K-AKT or RAS-RAF-MEK-ERK signaling pathway. Required for the function of REG3A in regulating keratinocyte proliferation and differentiation. Required for the inhibition of skin inflammation mediated by REG3A through the activation of PI3K-AKT-STAT3 pathway. Required for the function of REG3A and REG3G in glucose tolerance in pancreas. Expressed in microglia, is activated by nociceptor-derived REG3G in response to endotoxins, leading to the inhibition of kynurenine pathway to prevent endotoxic death. The polypeptide is Exostosin-like 3 (Mus musculus (Mouse)).